The following is a 320-amino-acid chain: Cytochrome f (320 aa).

The signal sequence occupies residues 1 to 35; that stretch reads MQNRNFNNLIIKWAIRLISIMIIINTIFWSSISEA. The heme site is built by Phe36, Cys56, Cys59, and His60. The helical transmembrane segment at 286-305 threads the bilayer; sequence IQGLLLFFGSVILAQIFLVL.

It belongs to the cytochrome f family. In terms of assembly, the 4 large subunits of the cytochrome b6-f complex are cytochrome b6, subunit IV (17 kDa polypeptide, petD), cytochrome f and the Rieske protein, while the 4 small subunits are PetG, PetL, PetM and PetN. The complex functions as a dimer. Heme serves as cofactor.

It is found in the plastid. It localises to the chloroplast thylakoid membrane. In terms of biological role, component of the cytochrome b6-f complex, which mediates electron transfer between photosystem II (PSII) and photosystem I (PSI), cyclic electron flow around PSI, and state transitions. The chain is Cytochrome f (petA) from Marchantia polymorpha (Common liverwort).